An 85-amino-acid chain; its full sequence is Homeobox protein knotted-1-like 5 (85 aa).

Positions 1–21 (ELKEMLLKKYSGCLSRLRSEF) constitute an ELK domain. Positions 22 to 85 (LKKRKKGKLP…NQRKRHWKPS (64 aa)) form a DNA-binding region, homeobox; TALE-type.

The protein belongs to the TALE/KNOX homeobox family. Strongly expressed in ear inflorescence primordia and shoot meristem. Weakly expressed in embryos. Absent from leaves.

Its subcellular location is the nucleus. In terms of biological role, probably binds to the DNA sequence 5'-TGAC-3'. This Zea mays (Maize) protein is Homeobox protein knotted-1-like 5 (KNOX5).